The primary structure comprises 446 residues: Glutamine synthetase (446 aa).

The 94-residue stretch at 14–107 (NNVKFLRFQF…IICDVYRKNG (94 aa)) folds into the GS beta-grasp domain. Residues 114-446 (PRGCLKRVLA…DWEFNKYVRI (333 aa)) form the GS catalytic domain. Mg(2+) is bound by residues E138 and E140. ATP is bound at residue E187. Positions 192 and 199 each coordinate Mg(2+). Residues 243–244 (NG) and G244 each bind L-glutamate. H248 lines the Mg(2+) pocket. Residue S252 participates in ATP binding. R301, E307, and R319 together coordinate L-glutamate. Positions 319, 324, and 331 each coordinate ATP. E336 provides a ligand contact to Mg(2+). R338 is a binding site for L-glutamate.

The protein belongs to the glutamine synthetase family. In terms of assembly, oligomer of 12 subunits arranged in the form of two hexagons. Requires Mg(2+) as cofactor.

It is found in the cytoplasm. The enzyme catalyses L-glutamate + NH4(+) + ATP = L-glutamine + ADP + phosphate + H(+). In terms of biological role, probably involved in nitrogen metabolism via ammonium assimilation. Catalyzes the ATP-dependent biosynthesis of glutamine from glutamate and ammonia. This chain is Glutamine synthetase, found in Methanococcus voltae.